The primary structure comprises 1464 residues: Bridge-like lipid transfer protein family member 3B (1464 aa).

Residues Gly3–Cys94 enclose the Chorein N-terminal domain. Disordered regions lie at residues Ser267 to Ser297 and Asp409 to Lys436. Over residues Pro278 to Ser297 the composition is skewed to polar residues. 5 positions are modified to phosphoserine: Ser414, Ser418, Ser774, Ser935, and Ser1009. Disordered stretches follow at residues Ser1066–Arg1089, Leu1164–Gln1183, and Gln1392–Asn1413. Polar residues-rich tracts occupy residues Leu1164–Ala1182 and Ser1394–Asn1413. The stretch at Ser1418–His1456 forms a coiled coil.

As to quaternary structure, monomer. Homodimer (via N-terminus). Associates with the Golgi-associated retrograde protein (GARP) complex. Interacts with GARP complex component VPS52. Interacts (via C-terminal coiled-coil domain) with STX6.

The protein resides in the cytoplasm. Its subcellular location is the cytosol. It localises to the early endosome. In terms of biological role, tube-forming lipid transport protein which mediates the transfer of lipids between membranes at organelle contact sites. Required for retrograde traffic of vesicle clusters in the early endocytic pathway to the Golgi complex. This chain is Bridge-like lipid transfer protein family member 3B, found in Homo sapiens (Human).